The sequence spans 371 residues: MPANFTEGSFDSNGTGQMLDSSPVACTETVTFTEVVEGKEWGSFYYSFKTEQLITLWVLFVFTIVGNSVVLFSTWRRKRKSRMTFFVTQLAITDSFTGLVNILTDIIWRFTGDFMAPDLVCRVVRYLQVVLLYASTYVLVSLSIDRYHAIVYPMKFLQGEKQAKVLIVIAWSLSFLFSIPTLIIFGKRTLSNGEVQCWALWPDDSYWTPYMTIVAFLVYFIPLTIISVMYGIVIRTIWIKSKTYETVISNCSDGKLCSSYNRGLISKAKIKAIKYSIVIILAFICCWSPYFLFDILDNFNLLPDTQERFYASVIIQNLPALNSAINPLIYCVFSSSISFPCGERRSQDSIMTFRERTERHEMQILSKPEFI.

Residues 1–52 (MPANFTEGSFDSNGTGQMLDSSPVACTETVTFTEVVEGKEWGSFYYSFKTEQ) are Extracellular-facing. N4 and N13 each carry an N-linked (GlcNAc...) asparagine glycan. The helical transmembrane segment at 53–73 (LITLWVLFVFTIVGNSVVLFS) threads the bilayer. Topologically, residues 74 to 82 (TWRRKRKSR) are cytoplasmic. A helical membrane pass occupies residues 83-103 (MTFFVTQLAITDSFTGLVNIL). Topologically, residues 104 to 123 (TDIIWRFTGDFMAPDLVCRV) are extracellular. A disulfide bridge connects residues C121 and C197. The chain crosses the membrane as a helical span at residues 124 to 144 (VRYLQVVLLYASTYVLVSLSI). Residues 145–164 (DRYHAIVYPMKFLQGEKQAK) lie on the Cytoplasmic side of the membrane. The chain crosses the membrane as a helical span at residues 165–185 (VLIVIAWSLSFLFSIPTLIIF). Residues 186–212 (GKRTLSNGEVQCWALWPDDSYWTPYMT) lie on the Extracellular side of the membrane. Residues 213–233 (IVAFLVYFIPLTIISVMYGIV) traverse the membrane as a helical segment. Residues 234–275 (IRTIWIKSKTYETVISNCSDGKLCSSYNRGLISKAKIKAIKY) are Cytoplasmic-facing. The chain crosses the membrane as a helical span at residues 276 to 296 (SIVIILAFICCWSPYFLFDIL). Over 297–312 (DNFNLLPDTQERFYAS) the chain is Extracellular. The helical transmembrane segment at 313 to 333 (VIIQNLPALNSAINPLIYCVF) threads the bilayer. The Cytoplasmic portion of the chain corresponds to 334-371 (SSSISFPCGERRSQDSIMTFRERTERHEMQILSKPEFI).

Belongs to the G-protein coupled receptor 1 family. Vasopressin/oxytocin receptor subfamily.

The protein localises to the cell membrane. In terms of biological role, G-protein coupled receptor for neuropeptide S (NPS). Promotes mobilization of intracellular Ca(2+) stores. Inhibits cell growth in response to NPS binding. Involved in pathogenesis of asthma and other IgE-mediated diseases. The polypeptide is Neuropeptide S receptor (NPSR1) (Macaca mulatta (Rhesus macaque)).